The chain runs to 151 residues: Small ribosomal subunit protein uS15 (151 aa).

S21 and S32 each carry phosphoserine.

The protein belongs to the universal ribosomal protein uS15 family. Component of the small ribosomal subunit (SSU). Mature yeast ribosomes consist of a small (40S) and a large (60S) subunit. The 40S small subunit contains 1 molecule of ribosomal RNA (18S rRNA) and at least 33 different proteins. The large 60S subunit contains 3 rRNA molecules (25S, 5.8S and 5S rRNA) and at least 46 different proteins.

It is found in the cytoplasm. Its function is as follows. Component of the ribosome, a large ribonucleoprotein complex responsible for the synthesis of proteins in the cell. The small ribosomal subunit (SSU) binds messenger RNAs (mRNAs) and translates the encoded message by selecting cognate aminoacyl-transfer RNA (tRNA) molecules. The large subunit (LSU) contains the ribosomal catalytic site termed the peptidyl transferase center (PTC), which catalyzes the formation of peptide bonds, thereby polymerizing the amino acids delivered by tRNAs into a polypeptide chain. The nascent polypeptides leave the ribosome through a tunnel in the LSU and interact with protein factors that function in enzymatic processing, targeting, and the membrane insertion of nascent chains at the exit of the ribosomal tunnel. The polypeptide is Small ribosomal subunit protein uS15 (rps13) (Schizosaccharomyces pombe (strain 972 / ATCC 24843) (Fission yeast)).